The primary structure comprises 243 residues: tRNA pseudouridine synthase A (243 aa).

The active-site Nucleophile is aspartate 53. Tyrosine 111 contacts substrate.

The protein belongs to the tRNA pseudouridine synthase TruA family. In terms of assembly, homodimer.

The enzyme catalyses uridine(38/39/40) in tRNA = pseudouridine(38/39/40) in tRNA. Formation of pseudouridine at positions 38, 39 and 40 in the anticodon stem and loop of transfer RNAs. This is tRNA pseudouridine synthase A from Chlorobium limicola (strain DSM 245 / NBRC 103803 / 6330).